We begin with the raw amino-acid sequence, 163 residues long: Crossover junction endodeoxyribonuclease RuvC (163 aa).

Active-site residues include D8, E68, and D140. Positions 8, 68, and 140 each coordinate Mg(2+).

The protein belongs to the RuvC family. Homodimer which binds Holliday junction (HJ) DNA. The HJ becomes 2-fold symmetrical on binding to RuvC with unstacked arms; it has a different conformation from HJ DNA in complex with RuvA. In the full resolvosome a probable DNA-RuvA(4)-RuvB(12)-RuvC(2) complex forms which resolves the HJ. Mg(2+) serves as cofactor.

The protein localises to the cytoplasm. It catalyses the reaction Endonucleolytic cleavage at a junction such as a reciprocal single-stranded crossover between two homologous DNA duplexes (Holliday junction).. The RuvA-RuvB-RuvC complex processes Holliday junction (HJ) DNA during genetic recombination and DNA repair. Endonuclease that resolves HJ intermediates. Cleaves cruciform DNA by making single-stranded nicks across the HJ at symmetrical positions within the homologous arms, yielding a 5'-phosphate and a 3'-hydroxyl group; requires a central core of homology in the junction. The consensus cleavage sequence is 5'-(A/T)TT(C/G)-3'. Cleavage occurs on the 3'-side of the TT dinucleotide at the point of strand exchange. HJ branch migration catalyzed by RuvA-RuvB allows RuvC to scan DNA until it finds its consensus sequence, where it cleaves and resolves the cruciform DNA. This Erythrobacter litoralis (strain HTCC2594) protein is Crossover junction endodeoxyribonuclease RuvC.